Consider the following 204-residue polypeptide: Superoxide dismutase [Mn] (204 aa).

His29, His84, Asp167, and His171 together coordinate Mn(2+).

Belongs to the iron/manganese superoxide dismutase family. In terms of assembly, homotetramer. Mn(2+) is required as a cofactor.

It catalyses the reaction 2 superoxide + 2 H(+) = H2O2 + O2. Destroys superoxide anion radicals which are normally produced within the cells and which are toxic to biological systems. The polypeptide is Superoxide dismutase [Mn] (sodA) (Thermus aquaticus).